The chain runs to 404 residues: Arginine biosynthesis bifunctional protein ArgJ (404 aa).

T156, K182, T193, E277, N399, and S404 together coordinate substrate. T193 acts as the Nucleophile in catalysis.

Belongs to the ArgJ family. As to quaternary structure, heterotetramer of two alpha and two beta chains.

The protein localises to the cytoplasm. The catalysed reaction is N(2)-acetyl-L-ornithine + L-glutamate = N-acetyl-L-glutamate + L-ornithine. The enzyme catalyses L-glutamate + acetyl-CoA = N-acetyl-L-glutamate + CoA + H(+). It participates in amino-acid biosynthesis; L-arginine biosynthesis; L-ornithine and N-acetyl-L-glutamate from L-glutamate and N(2)-acetyl-L-ornithine (cyclic): step 1/1. Its pathway is amino-acid biosynthesis; L-arginine biosynthesis; N(2)-acetyl-L-ornithine from L-glutamate: step 1/4. Functionally, catalyzes two activities which are involved in the cyclic version of arginine biosynthesis: the synthesis of N-acetylglutamate from glutamate and acetyl-CoA as the acetyl donor, and of ornithine by transacetylation between N(2)-acetylornithine and glutamate. The protein is Arginine biosynthesis bifunctional protein ArgJ of Chlorobaculum tepidum (strain ATCC 49652 / DSM 12025 / NBRC 103806 / TLS) (Chlorobium tepidum).